A 1712-amino-acid polypeptide reads, in one-letter code: U3 small nucleolar RNA-associated protein 10 (1712 aa).

HEAT repeat units follow at residues 164-202, 490-528, 564-605, 987-1025, 1236-1275, 1605-1646, and 1667-1705; these read EELV…GRGE, TCDF…ASGS, TLLS…PKHG, TQTI…AFEH, VISL…RFGK, EEVT…DSAA, and LGLL…VLGE.

This sequence belongs to the HEATR1/UTP10 family. In terms of assembly, component of the ribosomal small subunit (SSU) processome.

It is found in the nucleus. Its subcellular location is the nucleolus. Functionally, involved in nucleolar processing of pre-18S ribosomal RNA. Involved in ribosome biosynthesis. In Phaeosphaeria nodorum (strain SN15 / ATCC MYA-4574 / FGSC 10173) (Glume blotch fungus), this protein is U3 small nucleolar RNA-associated protein 10.